The following is a 380-amino-acid chain: G-protein coupled receptor (380 aa).

A run of 7 helical transmembrane segments spans residues 26 to 46 (VISIFSLTTFVGLAITLYLGI), 60 to 80 (LVCCDVLIVNAVCLITLPLWV), 97 to 117 (FAGMFYTMNVYMSVWSCVIVT), 145 to 165 (VTILTLLVTFIGLFSLTETSI), 184 to 204 (AALGYTVPWLAIAIMIVHIIL), 220 to 240 (ILMWMMFTLLVTQGPYYSLSA), and 275 to 295 (VAMLVCTHALAITRMFSVPLI). Cysteines 95 and 170 form a disulfide. The tract at residues 328-380 (SQSKLLRGEENPNYDYSPKSVRIKPLKSPGGGDNSSLKDEGYDEESQNGFSIG) is disordered.

It belongs to the G-protein coupled receptor 1 family.

The protein resides in the host membrane. This chain is G-protein coupled receptor, found in Elephas maximus (Indian elephant).